Here is a 258-residue protein sequence, read N- to C-terminus: Cytolethal distending toxin subunit A (258 aa).

The first 21 residues, 1–21 (MANKRTPIFIAGILIPILLNG), serve as a signal peptide directing secretion. Cys-22 carries the N-palmitoyl cysteine lipid modification. Cys-22 is lipidated: S-diacylglycerol cysteine. Residues 40 to 71 (VEGGPTVPSPDEPGLPLPGPGPALPTNGAIPI) form a disordered region. The segment covering 46 to 62 (VPSPDEPGLPLPGPGPA) has biased composition (pro residues). Positions 93-104 (WSRGAGSSLWAY) are mediates binding to target cells. The 99-residue stretch at 125-223 (RPNTIQFRNV…EKNFEFMWSI (99 aa)) folds into the Ricin B-type lectin domain. The disordered stretch occupies residues 236-258 (KPEIRPFPPQPIEPDEHSTGGEQ). Basic and acidic residues predominate over residues 249–258 (PDEHSTGGEQ).

As to quaternary structure, heterotrimer of 3 subunits, CdtA, CdtB and CdtC.

The protein resides in the cell outer membrane. In terms of biological role, CDTs are cytotoxins which induce host cell distension, growth arrest in G2/M phase, nucleus swelling, and chromatin fragmentation in HeLa cells. CdtA, along with CdtC, probably forms a heterodimeric subunit required for the delivery of CdtB. The polypeptide is Cytolethal distending toxin subunit A (cdtA) (Escherichia coli).